A 1849-amino-acid chain; its full sequence is Protein virilizer (1849 aa).

5 stretches are compositionally biased toward basic and acidic residues: residues 206-219 (QHYHQHVDEEQREM), 242-265 (THSESNEREYIRCSRDKGSRDWSR), 281-291 (RSRSDADEHKW), 332-347 (HSSESLHRDRDDEERS), and 785-818 (VEAKPEGKEDKPMDDSVEQKPDEGKAAGIRAAEE). Disordered stretches follow at residues 206-364 (QHYH…DEII), 783-818 (RVVEAKPEGKEDKPMDDSVEQKPDEGKAAGIRAAEE), 1557-1584 (SASMETPAVETENDGANPAASCSTSSSG), 1666-1686 (GESKRTLNLSGSPQSNREMTP), 1715-1782 (RGRG…NRGS), and 1798-1849 (IGSP…PYLR). Residues 1671–1684 (TLNLSGSPQSNREM) are compositionally biased toward polar residues. A compositionally biased stretch (low complexity) spans 1732 to 1742 (SRPPNTSRPPS). Positions 1800 to 1818 (SPSSWTESGGGSYRSTSES) are enriched in polar residues.

Belongs to the vir family. As to quaternary structure, component of the WMM complex, a N6-methyltransferase complex composed of a catalytic subcomplex, named MAC, and of an associated subcomplex, named MACOM. The MAC subcomplex is composed of Ime4/Mettl3 and Mettl14. The MACOM subcomplex is composed of fl(2)d, Flacc/Xio, Hakai, vir, and, in some cases of nito. Part of a complex containing fl(2)d, Sxl and vir.

It localises to the nucleus. Its function is as follows. Associated component of the WMM complex, a complex that mediates N6-methyladenosine (m6A) methylation of mRNAs, a modification that plays a role in the efficiency of mRNA splicing and is required for sex determination. Required for sex determination and dosage compensation via Sxl alternative splicing: m6A methylation acts as a key regulator of Sxl pre-mRNA and promotes female-specific alternative splicing of Sxl, which determines female physiognomy. M6A methylation is also required for neuronal functions. Required for proper inclusion of regulated exons in Ubx transcripts, leading to isoforms Ia/b and IIa/b. The chain is Protein virilizer (vir) from Drosophila pseudoobscura pseudoobscura (Fruit fly).